The sequence spans 232 residues: Ubiquinone biosynthesis O-methyltransferase (232 aa).

Positions 36, 55, 76, and 120 each coordinate S-adenosyl-L-methionine.

This sequence belongs to the methyltransferase superfamily. UbiG/COQ3 family.

It catalyses the reaction a 3-demethylubiquinol + S-adenosyl-L-methionine = a ubiquinol + S-adenosyl-L-homocysteine + H(+). The catalysed reaction is a 3-(all-trans-polyprenyl)benzene-1,2-diol + S-adenosyl-L-methionine = a 2-methoxy-6-(all-trans-polyprenyl)phenol + S-adenosyl-L-homocysteine + H(+). It participates in cofactor biosynthesis; ubiquinone biosynthesis. In terms of biological role, O-methyltransferase that catalyzes the 2 O-methylation steps in the ubiquinone biosynthetic pathway. The chain is Ubiquinone biosynthesis O-methyltransferase from Burkholderia mallei (strain ATCC 23344).